We begin with the raw amino-acid sequence, 189 residues long: Adenylate kinase (189 aa).

Ala-10 to Thr-15 contributes to the ATP binding site. The segment at Ser-30–Val-59 is NMP. Residues Thr-31, Arg-36, Gly-57–Val-59, Gly-85–Arg-88, and Gln-92 each bind AMP. The segment at Lys-126 to Asp-136 is LID. Arg-127 provides a ligand contact to ATP. AMP-binding residues include Arg-133 and Arg-144. Gly-172 serves as a coordination point for ATP.

It belongs to the adenylate kinase family. Monomer.

The protein resides in the cytoplasm. The catalysed reaction is AMP + ATP = 2 ADP. It functions in the pathway purine metabolism; AMP biosynthesis via salvage pathway; AMP from ADP: step 1/1. Functionally, catalyzes the reversible transfer of the terminal phosphate group between ATP and AMP. Plays an important role in cellular energy homeostasis and in adenine nucleotide metabolism. This is Adenylate kinase from Hyphomonas neptunium (strain ATCC 15444).